The sequence spans 264 residues: MKQYLDLIKKIIKNGNSKKDRTGTGTLSIFGHHMKFDLKKGFPLITTKKCHIPSIIHELLWFLRGETNIKYLNENKISIWDNWADKFGDLGPIYGKQWRSWDTSNGKKIDQIKNVLKQIKEDPDSRRILVSSWNVGEIDKMSLAPCHILFQFYVLKKKLSCQLYQRSCDVFLGLPFNIASYAILIHMIAQQCNLQVGEFLWTGGDVHLYKNHVELAKKQILRIPKKLPELIILKKPQSLFQYSFEDFKIVGYKPYSLIKGKISV.

DUMP is bound at residue Arg-21. A (6R)-5,10-methylene-5,6,7,8-tetrahydrofolate-binding site is contributed by His-51. 126–127 serves as a coordination point for dUMP; the sequence is RR. Cys-146 functions as the Nucleophile in the catalytic mechanism. DUMP-binding positions include 166 to 169, Asn-177, and 207 to 209; these read RSCD and HLY. Residue Asp-169 participates in (6R)-5,10-methylene-5,6,7,8-tetrahydrofolate binding. Ser-263 is a (6R)-5,10-methylene-5,6,7,8-tetrahydrofolate binding site.

This sequence belongs to the thymidylate synthase family. Bacterial-type ThyA subfamily. Homodimer.

The protein localises to the cytoplasm. It catalyses the reaction dUMP + (6R)-5,10-methylene-5,6,7,8-tetrahydrofolate = 7,8-dihydrofolate + dTMP. It participates in pyrimidine metabolism; dTTP biosynthesis. Functionally, catalyzes the reductive methylation of 2'-deoxyuridine-5'-monophosphate (dUMP) to 2'-deoxythymidine-5'-monophosphate (dTMP) while utilizing 5,10-methylenetetrahydrofolate (mTHF) as the methyl donor and reductant in the reaction, yielding dihydrofolate (DHF) as a by-product. This enzymatic reaction provides an intracellular de novo source of dTMP, an essential precursor for DNA biosynthesis. The sequence is that of Thymidylate synthase from Buchnera aphidicola subsp. Schizaphis graminum (strain Sg).